We begin with the raw amino-acid sequence, 244 residues long: Homeobox-leucine zipper protein HOX14 (244 aa).

A disordered region spans residues 25–64; it reads ASGEVQGERPRARRRRRRGARCVGGGGGGGEVDGGDPKKR. The span at 35-44 shows a compositional bias: basic residues; sequence RARRRRRRGA. The span at 46-56 shows a compositional bias: gly residues; sequence CVGGGGGGGEV. The segment at residues 59–118 is a DNA-binding region (homeobox); the sequence is GDPKKRRLSDEQVEMLELSFREERKLETGRKVHLASELGLDPKQVAVWFQNRRARHKSKL. A coiled-coil region spans residues 108–167; the sequence is QNRRARHKSKLLEEEFSKLKHAHDAAILHKCHLENEVLRLKERLVVAEEEVRRLRSAAGS.

It belongs to the HD-ZIP homeobox family. Class I subfamily. As to expression, expressed in roots, stems, leaf blades and panicles.

Its subcellular location is the nucleus. Probable transcription factor. This chain is Homeobox-leucine zipper protein HOX14 (HOX14), found in Oryza sativa subsp. indica (Rice).